A 317-amino-acid chain; its full sequence is Aspartate carbamoyltransferase catalytic subunit (317 aa).

Carbamoyl phosphate contacts are provided by Arg66 and Thr67. Position 94 (Lys94) interacts with L-aspartate. 3 residues coordinate carbamoyl phosphate: Arg116, His144, and Gln147. Residues Arg177 and Arg231 each contribute to the L-aspartate site. Residues Gly272 and Pro273 each coordinate carbamoyl phosphate.

It belongs to the aspartate/ornithine carbamoyltransferase superfamily. ATCase family. As to quaternary structure, heterododecamer (2C3:3R2) of six catalytic PyrB chains organized as two trimers (C3), and six regulatory PyrI chains organized as three dimers (R2).

The enzyme catalyses carbamoyl phosphate + L-aspartate = N-carbamoyl-L-aspartate + phosphate + H(+). It participates in pyrimidine metabolism; UMP biosynthesis via de novo pathway; (S)-dihydroorotate from bicarbonate: step 2/3. Its function is as follows. Catalyzes the condensation of carbamoyl phosphate and aspartate to form carbamoyl aspartate and inorganic phosphate, the committed step in the de novo pyrimidine nucleotide biosynthesis pathway. The polypeptide is Aspartate carbamoyltransferase catalytic subunit (Rhodopseudomonas palustris (strain ATCC BAA-98 / CGA009)).